A 580-amino-acid polypeptide reads, in one-letter code: Rap guanine nucleotide exchange factor 5 (580 aa).

Residues 68–201 (DRYVVVSGTP…ELKEFQKILG (134 aa)) enclose the N-terminal Ras-GEF domain. The Ras-GEF domain occupies 345 to 579 (NTWDLALELM…FELSHRIEPR (235 aa)).

As to expression, widely expressed with highest levels in brain.

Its subcellular location is the nucleus. Its function is as follows. Guanine nucleotide exchange factor (GEF) for RAP1A, RAP2A and MRAS/M-Ras-GTP. Its association with MRAS inhibits Rap1 activation. The protein is Rap guanine nucleotide exchange factor 5 (RAPGEF5) of Homo sapiens (Human).